We begin with the raw amino-acid sequence, 314 residues long: Prohormone-3 (314 aa).

Residues 1 to 19 (MGRVLLSASSLLLHIQVFT) form the signal peptide. A helical transmembrane segment spans residues 90 to 112 (YTCVALTVVALVSTMHFGVEAWG).

It is found in the membrane. This is Prohormone-3 from Apis mellifera (Honeybee).